The sequence spans 485 residues: Apolipoprotein N-acyltransferase (485 aa).

Helical transmembrane passes span 8–28, 49–69, 76–96, 121–141, 157–177, and 186–206; these read IAGA…IAFV, GWLF…VSIH, VPLA…FIAF, WWVV…WLFL, FGIY…YLLV, and IMCL…TFIP. Residues 220-457 form the CN hydrolase domain; that stretch reads VQGNIGQRLK…RLLLTGQIKP (238 aa). Glutamate 259 acts as the Proton acceptor in catalysis. Residue lysine 317 is part of the active site. The active-site Nucleophile is cysteine 369. The chain crosses the membrane as a helical span at residues 464 to 484; it reads LMRWNYYPVVGIIIIFLLLTF.

It belongs to the CN hydrolase family. Apolipoprotein N-acyltransferase subfamily.

It localises to the cell inner membrane. It catalyses the reaction N-terminal S-1,2-diacyl-sn-glyceryl-L-cysteinyl-[lipoprotein] + a glycerophospholipid = N-acyl-S-1,2-diacyl-sn-glyceryl-L-cysteinyl-[lipoprotein] + a 2-acyl-sn-glycero-3-phospholipid + H(+). The protein operates within protein modification; lipoprotein biosynthesis (N-acyl transfer). Functionally, catalyzes the phospholipid dependent N-acylation of the N-terminal cysteine of apolipoprotein, the last step in lipoprotein maturation. This is Apolipoprotein N-acyltransferase from Coxiella burnetii (strain RSA 493 / Nine Mile phase I).